The sequence spans 747 residues: DNA repair and recombination protein RAD54-like (747 aa).

A disordered region spans residues 1 to 42 (MRRSLAPSQLARRKPEDRSSDDEDWQPGTVTPKKRKSSSETQ). The tract at residues 2–9 (RRSLAPSQ) is required for chromatin remodeling, strand pairing activities and coupling of ATPase activity. Residue S38 is modified to Phosphoserine. Residues 170–345 (SRRIPGSHGC…FSLVHFVNSG (176 aa)) form the Helicase ATP-binding domain. Residue 183 to 190 (DEMGLGKT) participates in ATP binding. A DEGH box motif is present at residues 296–299 (DEGH). The 154-residue stretch at 500–653 (VLDYILAVTR…CVVDEEQDVE (154 aa)) folds into the Helicase C-terminal domain. K515 carries the post-translational modification N6-acetyllysine. Residue S572 is modified to Phosphoserine; by NEK1.

The protein belongs to the SNF2/RAD54 helicase family. As to quaternary structure, homohexamer. Interacts (via N-terminus) with RAD51. Interacts with NAP1L1. Interacts with BRD9; this interaction orchestrates RAD51-RAD54 complex formation. In terms of processing, acetylated. Acetylation promotes interaction with BRD9, and subsequently with RAD54, which is essential for homologous recombination (HR). Phosphorylated. Phosphorylation at Ser-572 by NEK1 specifically in G2 phase allows efficient removal of RAD51 filaments from DNA. As to expression, hardly detectable in most tissues. Dramatically increased in thymus, spleen and testis.

It localises to the nucleus. It catalyses the reaction ATP + H2O = ADP + phosphate + H(+). Plays an essential role in homologous recombination (HR) which is a major pathway for repairing DNA double-strand breaks (DSBs), single-stranded DNA (ssDNA) gaps, and stalled or collapsed replication forks. Acts as a molecular motor during the homology search and guides RAD51 ssDNA along a donor dsDNA thereby changing the homology search from the diffusion-based mechanism to a motor-guided mechanism. Plays also an essential role in RAD51-mediated synaptic complex formation which consists of three strands encased in a protein filament formed once homology is recognized. Once DNA strand exchange occured, dissociates RAD51 from nucleoprotein filaments formed on dsDNA. Deficiency also resulted in an increased frequency of end-to-end chromosome fusions involving telomeres compared to the controls, suggesting a putative role in telomere capping. Non-homologous end joining (NHEJ) and homologous recombination (HR) represent the two major pathways of DNA double-strand break (DSB) repair in eukaryotic cells. LIG4 and RAD54L cooperate to support cellular proliferation, repair spontaneous DSBs, and prevent chromosome and single chromatid aberrations. This is DNA repair and recombination protein RAD54-like (Rad54l) from Mus musculus (Mouse).